The following is a 388-amino-acid chain: MNVHEFQAKGVLSSFGVTVPRGVVVESVEEVDRLLGDLAPGLVAVKAQIHAGGRGKAGGVKIGKTKDEVKSLVKQMLHSVLITHQTSPEGQKVNKVYLEEGVDIGKEYYISAVVDRSVGRVSIIFSSEGGVDIETVAKERPNMVSVVHVDPLYGFRSFHGQELCRRFGLGPKQVSGVVSMARKIYKVLVETDASQVEINPMAETSSGEFLALDAKIAFDDNGLYRNPEIAKLQDPDEYAAEELEAAKHGLSYIKMDGNIGCMVNGAGLAMATMDIIKYYGGEPANFLDVGGGANQEAVREAFKIILQSGVKGILVNIFGGIMRCDVIAKGIIESTKEIGVDVPLVVRLSGTNFEIGRKLLDDSGLGITAAADLDEAASFIVKMVNERR.

Residues 9-244 form the ATP-grasp domain; the sequence is KGVLSSFGVT…PDEYAAEELE (236 aa). Residues K46, 53-55, E99, V102, and E107 each bind ATP; that span reads GRG. Residues N199 and D213 each coordinate Mg(2+). Substrate is bound by residues N264 and 320-322; that span reads GIM.

This sequence belongs to the succinate/malate CoA ligase beta subunit family. In terms of assembly, heterotetramer of two alpha and two beta subunits. Requires Mg(2+) as cofactor.

It catalyses the reaction succinate + ATP + CoA = succinyl-CoA + ADP + phosphate. The enzyme catalyses GTP + succinate + CoA = succinyl-CoA + GDP + phosphate. It participates in carbohydrate metabolism; tricarboxylic acid cycle; succinate from succinyl-CoA (ligase route): step 1/1. Its function is as follows. Succinyl-CoA synthetase functions in the citric acid cycle (TCA), coupling the hydrolysis of succinyl-CoA to the synthesis of either ATP or GTP and thus represents the only step of substrate-level phosphorylation in the TCA. The beta subunit provides nucleotide specificity of the enzyme and binds the substrate succinate, while the binding sites for coenzyme A and phosphate are found in the alpha subunit. The sequence is that of Succinate--CoA ligase [ADP-forming] subunit beta from Anaplasma marginale (strain St. Maries).